A 55-amino-acid chain; its full sequence is Rubredoxin-1 (55 aa).

Positions 1 to 54 (MKKWQCVVCGLIYDEAKGWPEEGIEAGTRWEDVPEDWLCPDCGVGKLDFEMIEI) constitute a Rubredoxin-like domain. Fe cation is bound by residues C6, C9, C39, and C42.

This sequence belongs to the rubredoxin family. It depends on Fe(3+) as a cofactor.

It localises to the cytoplasm. Its pathway is hydrocarbon metabolism; alkane degradation. Involved in the hydrocarbon hydroxylating system, which transfers electrons from NADH to rubredoxin reductase and then through rubredoxin to alkane 1 monooxygenase. The chain is Rubredoxin-1 (rubA1) from Pseudomonas aeruginosa (strain ATCC 15692 / DSM 22644 / CIP 104116 / JCM 14847 / LMG 12228 / 1C / PRS 101 / PAO1).